The chain runs to 334 residues: Lipoyl synthase (334 aa).

The tract at residues Met-1–Ala-36 is disordered. Residues Ala-7 to Ala-20 show a composition bias toward low complexity. The segment covering Glu-21–Ala-36 has biased composition (basic and acidic residues). Residues Cys-81, Cys-86, Cys-92, Cys-107, Cys-111, Cys-114, and Ser-321 each contribute to the [4Fe-4S] cluster site. The Radical SAM core domain maps to Cys-92 to Thr-310.

This sequence belongs to the radical SAM superfamily. Lipoyl synthase family. It depends on [4Fe-4S] cluster as a cofactor.

Its subcellular location is the cytoplasm. The catalysed reaction is [[Fe-S] cluster scaffold protein carrying a second [4Fe-4S](2+) cluster] + N(6)-octanoyl-L-lysyl-[protein] + 2 oxidized [2Fe-2S]-[ferredoxin] + 2 S-adenosyl-L-methionine + 4 H(+) = [[Fe-S] cluster scaffold protein] + N(6)-[(R)-dihydrolipoyl]-L-lysyl-[protein] + 4 Fe(3+) + 2 hydrogen sulfide + 2 5'-deoxyadenosine + 2 L-methionine + 2 reduced [2Fe-2S]-[ferredoxin]. Its pathway is protein modification; protein lipoylation via endogenous pathway; protein N(6)-(lipoyl)lysine from octanoyl-[acyl-carrier-protein]: step 2/2. In terms of biological role, catalyzes the radical-mediated insertion of two sulfur atoms into the C-6 and C-8 positions of the octanoyl moiety bound to the lipoyl domains of lipoate-dependent enzymes, thereby converting the octanoylated domains into lipoylated derivatives. The protein is Lipoyl synthase of Cupriavidus taiwanensis (strain DSM 17343 / BCRC 17206 / CCUG 44338 / CIP 107171 / LMG 19424 / R1) (Ralstonia taiwanensis (strain LMG 19424)).